The following is a 356-amino-acid chain: Glutamine synthetase cytosolic isozyme 1-1 (356 aa).

At serine 2 the chain carries N-acetylserine. Phosphoserine is present on residues serine 2 and serine 48. The region spanning 19 to 99 (IIAEYIWVGG…VMCDAYTPAG (81 aa)) is the GS beta-grasp domain. Residues 36-62 (KARTLPGPVTDPSQLPKWNYDGSSTGQ) form a disordered region. The region spanning 106-356 (KRHAAAKVFS…IAETTILWNP (251 aa)) is the GS catalytic domain.

It belongs to the glutamine synthetase family. As to quaternary structure, homooctamer. Interacts with CRK3 and GRF3. Phosphorylated by CRK3. Expressed in root tips, root hairs and epidermis. Ubiquitously expressed with higher levels in siliques and roots.

Its subcellular location is the cytoplasm. It carries out the reaction L-glutamate + NH4(+) + ATP = L-glutamine + ADP + phosphate + H(+). Functionally, high-affinity glutamine synthetase which catalyzes the synthesis of glutamine from ammonium and glutamate. May contribute to the homeostatic control of glutamine synthesis in roots. In Arabidopsis thaliana (Mouse-ear cress), this protein is Glutamine synthetase cytosolic isozyme 1-1 (GLN1-1).